We begin with the raw amino-acid sequence, 140 residues long: MAAITFHLDVVSAEKKIFSGRVETFQVTGSEGELGIFHGHTPLLTAIKPGMVRIVKQHGHEEIIYVSGGMVEIQPGTATVLADTAIRGEELDAAKAEEAKRRAEEQIQNQHGDMDFAQAASELAKAIAQLRVIELTKKRR.

This sequence belongs to the ATPase epsilon chain family. In terms of assembly, F-type ATPases have 2 components, CF(1) - the catalytic core - and CF(0) - the membrane proton channel. CF(1) has five subunits: alpha(3), beta(3), gamma(1), delta(1), epsilon(1). CF(0) has three main subunits: a, b and c.

It is found in the cell inner membrane. Its function is as follows. Produces ATP from ADP in the presence of a proton gradient across the membrane. This chain is ATP synthase epsilon chain (atpC), found in Vibrio alginolyticus.